A 539-amino-acid polypeptide reads, in one-letter code: Chitin deacetylase 1 (539 aa).

The first 23 residues, M1 to G23, serve as a signal peptide directing secretion. The region spanning Q42–L104 is the Chitin-binding type-2 domain. 6 disulfides stabilise this stretch: C80–C93, C122–C134, C129–C147, C141–C156, C168–C180, and C173–C178. The LDL-receptor class A domain occupies L121–D157. Residue D206 participates in Zn(2+) binding. 5 disulfides stabilise this stretch: C230–C489, C354–C361, C391–C397, C497–C520, and C503–C523. N-linked (GlcNAc...) asparagine glycosylation is present at N244. Zn(2+)-binding residues include H261 and H265. N-linked (GlcNAc...) asparagine glycosylation occurs at N296.

Belongs to the carbohydrate esterase 4 (CE4) family. As to quaternary structure, interacts with CPAP3-A1. The cofactor is Zn(2+). As to expression, highly expressed in epidermis and head. Moderate expression levels in fat body, Malpighian tubule, testis and midgut. Low expression in silk gland and ovary.

Its subcellular location is the secreted. The catalysed reaction is [(1-&gt;4)-N-acetyl-beta-D-glucosaminyl](n) + n H2O = chitosan + n acetate. Its activity is regulated as follows. Binding to the accessory protein CPAP3-A1 is essential for chitinase activity. Functionally, hydrolyzes the N-acetamido groups of N-acetyl-D-glucosamine residues in chitin. This is Chitin deacetylase 1 from Bombyx mori (Silk moth).